The chain runs to 441 residues: Carbohydrate sulfotransferase 3 (441 aa).

The Cytoplasmic segment spans residues 1–4; sequence MKMR. Residues 5-21 form a helical; Signal-anchor for type II membrane protein membrane-spanning segment; sequence SKYAIILFFVVALVIIE. At 22–441 the chain is on the lumenal side; sequence KERNIISRVS…LLENRNFWIT (420 aa). N-linked (GlcNAc...) asparagine glycans are attached at residues asparagine 47 and asparagine 58. 3'-phosphoadenylyl sulfate is bound at residue 106–112; the sequence is TRTGSSF. Asparagine 221 carries an N-linked (GlcNAc...) asparagine glycan. Position 266 to 274 (266 to 274) interacts with 3'-phosphoadenylyl sulfate; that stretch reads RDPRAVLAS. A glycan (N-linked (GlcNAc...) asparagine) is linked at asparagine 427.

It belongs to the sulfotransferase 1 family. Gal/GlcNAc/GalNAc subfamily. N-glycosylated. In electric organ, it is moderately expressed in spinal cord and electric lobe and undetectable in non-neural tissues. Expressed in a punctate distribution in the innervated portion of electrocytes. In the CNS, it is localized within the somas of motor neurons and neurons of the electromotor nucleus.

It localises to the golgi apparatus membrane. It carries out the reaction chondroitin beta-D-glucuronate + n 3'-phosphoadenylyl sulfate = chondroitin 6'-sulfate + n adenosine 3',5'-bisphosphate + n H(+). The catalysed reaction is 3'-phosphoadenylyl sulfate + keratan = adenosine 3',5'-bisphosphate + keratan 6'-sulfate.. Functionally, sulfotransferase that utilizes 3'-phospho-5'-adenylyl sulfate (PAPS) as sulfonate donor to catalyze the transfer of sulfate to position 6 of the N-acetylgalactosamine (GalNAc) residue of chondroitin. Chondroitin sulfate constitutes the predominant proteoglycan present in cartilage and is distributed on the surfaces of many cells and extracellular matrices. Catalyzes with a lower efficiency the sulfation of Gal residues of keratan sulfate, another glycosaminoglycan. Can also catalyze the sulfation of the Gal residues in sialyl N-acetyllactosamine (sialyl LacNAc) oligosaccharides. The protein is Carbohydrate sulfotransferase 3 (CHST3) of Tetronarce californica (Pacific electric ray).